The primary structure comprises 157 residues: Small ribosomal subunit protein bS6 (157 aa).

Positions 96 to 151 are enriched in basic and acidic residues; the sequence is HEEGPSAMMRKADRDRDRDERGGGGFRGDREGGFRGDREGGGFRGDRGPRRPRDDA. The interval 96-157 is disordered; it reads HEEGPSAMMR…RDDAPAATEE (62 aa).

Belongs to the bacterial ribosomal protein bS6 family.

Binds together with bS18 to 16S ribosomal RNA. This chain is Small ribosomal subunit protein bS6, found in Rhodopseudomonas palustris (strain BisA53).